The chain runs to 414 residues: MELSAVGERVFAAESIIKRRIRKGRIEYLVKWKGWAIKYSTWEPEENILDSRLIAAFEQKERERELYGPKKRGPKPKTFLLKARAQAEALRISDVHFSVKPSASASSPKLHSSAAVHRLKKDIRRCHRMSRRPLPRPDPQGGSPGLRPPISPFSETVRIINRKVKPREPKRNRIILNLKVIDKGPGGGSTAQGTGALARPKVPSRNRVIGKSKKFSESMLRTQIRHMKFGTFALYKPPPAPLAPSTAGKADVASSGPGLLLATPAAAPFDAHSSSSSGCPSPTLQSSDPDDAPPKLLPETLSRSVPNWRESEVLDLSIPPEAAATGQRVPPDVTGAADQALHTALEPTGAGSSEPEAGDWRPEMSPCSNVVVTDVTSNLLTVTIKEFCSPEDFEKVAAGVAGATGGGGGTGPSK.

Residues 11 to 69 enclose the Chromo domain; the sequence is FAAESIIKRRIRKGRIEYLVKWKGWAIKYSTWEPEENILDSRLIAAFEQKERERELYGP. Residue S107 is modified to Phosphoserine. Disordered stretches follow at residues 127-152, 267-308, and 344-365; these read HRMS…PISP, APFD…VPNW, and ALEP…PEMS. The segment covering 267–287 has biased composition (low complexity); it reads APFDAHSSSSSGCPSPTLQSS.

In terms of assembly, component of a PRC1-like complex. Distinct PRC1-like core complexes are composed of a RING1 subunit (RING1B or RING1A), one of the six PCGF proteins (PCGF1-6), one PHC protein (PHC1-3) and one of the CBX proteins (CBX2, CBX4, CBX6, CBX7 or CBX8). Interacts with PCGF1, PCGF2, PCGF3, BMI1, PCGF5, PCGF6, RING1 and RNF2. May interact with H3C15 and H3C1. Interacts (via chromodomain) with single-stranded RNA (ssRNA). Post-translationally, ubiquitinated. Ubiquitination regulates the function of the Polycomb group (PcG) multiprotein PRC1-like complex. Deubiquitinated by USP26. Expressed in mouse embryonic stem cells.

It is found in the nucleus. The protein localises to the chromosome. In terms of biological role, component of a Polycomb group (PcG) multiprotein PRC1-like complex, a complex class required to maintain the transcriptionally repressive state of many genes, including Hox genes, throughout development. PcG PRC1 complex acts via chromatin remodeling and modification of histones; it mediates monoubiquitination of histone H2A 'Lys-119', rendering chromatin heritably changed in its expressibility. Possibly contributes to the target selectivity of the PRC1 complex by binding specific regions of chromatin. Recruitment to chromatin might occur in an H3K27me3-independent fashion. May have a PRC1-independent function in embryonic stem cells. This is Chromobox protein homolog 6 (Cbx6) from Mus musculus (Mouse).